Here is a 789-residue protein sequence, read N- to C-terminus: Probable 3-hydroxyacyl-CoA dehydrogenase (789 aa).

It belongs to the 3-hydroxyacyl-CoA dehydrogenase family.

It carries out the reaction a (3S)-3-hydroxyacyl-CoA + NAD(+) = a 3-oxoacyl-CoA + NADH + H(+). It participates in lipid metabolism; fatty acid beta-oxidation. Functionally, involved in the degradation of long-chain fatty acids. This Bacillus subtilis (strain 168) protein is Probable 3-hydroxyacyl-CoA dehydrogenase (fadN).